Here is a 451-residue protein sequence, read N- to C-terminus: Probable plasmid replicative DNA helicase (451 aa).

One can recognise an SF4 helicase domain in the interval 194-451 (QNSFFDAFPT…SKFSAIKKVW (258 aa)). An ATP-binding site is contributed by 225–232 (ARPSIGKT).

This sequence belongs to the helicase family. DnaB subfamily. Homohexamer.

The enzyme catalyses Couples ATP hydrolysis with the unwinding of duplex DNA at the replication fork by translocating in the 5'-3' direction. This creates two antiparallel DNA single strands (ssDNA). The leading ssDNA polymer is the template for DNA polymerase III holoenzyme which synthesizes a continuous strand.. It catalyses the reaction ATP + H2O = ADP + phosphate + H(+). In terms of biological role, a replicative DNA helicase, it participates in initiation and elongation during DNA replication. Travels ahead of the DNA replisome, separating dsDNA into templates for DNA synthesis. A processive ATP-dependent 5'-3' DNA helicase it has DNA-dependent ATPase activity. The plasmid this protein is encoded on is thought to be required for growth within mammalian cells. This is Probable plasmid replicative DNA helicase from Chlamydia trachomatis serovar L2 (strain ATCC VR-902B / DSM 19102 / 434/Bu).